The sequence spans 101 residues: Small ribosomal subunit protein uS14 (101 aa).

Positions 1 to 10 (MAKKSSIEKN) are enriched in basic and acidic residues. A disordered region spans residues 1-25 (MAKKSSIEKNNRRKKMAKNAAPKRE).

Belongs to the universal ribosomal protein uS14 family. Part of the 30S ribosomal subunit. Contacts proteins S3 and S10.

Binds 16S rRNA, required for the assembly of 30S particles and may also be responsible for determining the conformation of the 16S rRNA at the A site. The chain is Small ribosomal subunit protein uS14 from Rhodopseudomonas palustris (strain BisA53).